The primary structure comprises 418 residues: AA11 family lytic polysaccharide monooxygenase B (418 aa).

The first 21 residues, 1–21 (MMFSKSGLVAVAMLGASAVEA), serve as a signal peptide directing secretion. The Cu(+) site is built by H22 and H82. 3 disulfide bridges follow: C50–C165, C87–C113, and C206–C240. Residues N120 and N134 are each glycosylated (N-linked (GlcNAc...) asparagine). The tract at residues 226–345 (DGNPSNLQPA…SSSSSNGALT (120 aa)) is disordered. A compositionally biased stretch (low complexity) spans 254–345 (SPSTPSTSSS…SSSSSNGALT (92 aa)).

The protein belongs to the polysaccharide monooxygenase AA11 family. Cu(2+) serves as cofactor.

It localises to the secreted. Functionally, lytic polysaccharide monooxygenase (LPMO)-like protein that acts as a strict peroxygenase and does not catalyze a monooxygenase reaction. It is indeed hardly active on chitin, while being very active on soluble oligomers of N-acetylglucosamine. Cleaves the glycosidic bonds byoxidizing the C1 position. Also unable to oxidize cellopentaose. Probably breaks glycosidic bonds in non-polymeric substrates possibly carbohydrates in the cell wall of the fungus or its competitors. In the presence of chitotetraose, the enzyme can withstand considerable amounts of H(2)O(2), which it uses to efficiently and stoichiometrically convert this substrate. The polypeptide is AA11 family lytic polysaccharide monooxygenase B (Aspergillus fumigatus (strain ATCC MYA-4609 / CBS 101355 / FGSC A1100 / Af293) (Neosartorya fumigata)).